The following is a 736-amino-acid chain: Catalase-peroxidase (736 aa).

The tract at residues 1-25 (MSENGKCPVTGKTSKPVAGGGTSNQ) is disordered. Residues 96–224 (WHSAGTYRMG…LAAVQMGLIY (129 aa)) constitute a cross-link (tryptophyl-tyrosyl-methioninium (Trp-Tyr) (with M-250)). Residue histidine 97 is the Proton acceptor of the active site. The tryptophyl-tyrosyl-methioninium (Tyr-Met) (with W-96) cross-link spans 224-250 (YVNPEGPDGNPDPIASGKDVRETFARM). Histidine 265 is a heme b binding site. The tract at residues 294–313 (GWKSSHGRGKGGDTISSGIE) is disordered.

The protein belongs to the peroxidase family. Peroxidase/catalase subfamily. In terms of assembly, homodimer or homotetramer. It depends on heme b as a cofactor. In terms of processing, formation of the three residue Trp-Tyr-Met cross-link is important for the catalase, but not the peroxidase activity of the enzyme.

It carries out the reaction H2O2 + AH2 = A + 2 H2O. It catalyses the reaction 2 H2O2 = O2 + 2 H2O. Its function is as follows. Bifunctional enzyme with both catalase and broad-spectrum peroxidase activity. In Desulfatibacillum aliphaticivorans, this protein is Catalase-peroxidase.